Reading from the N-terminus, the 1603-residue chain is Protein TIC 214 (1603 aa).

6 consecutive transmembrane segments (helical) span residues Val-11–Leu-31, Leu-58–Ile-78, Leu-86–Tyr-106, Ile-131–Leu-151, Leu-167–Ile-187, and Phe-213–Phe-233.

The protein belongs to the TIC214 family. Part of the Tic complex.

The protein resides in the plastid. Its subcellular location is the chloroplast inner membrane. Its function is as follows. Involved in protein precursor import into chloroplasts. May be part of an intermediate translocation complex acting as a protein-conducting channel at the inner envelope. The protein is Protein TIC 214 of Physcomitrium patens (Spreading-leaved earth moss).